The following is a 758-amino-acid chain: Calcium up-regulated protein E (758 aa).

The disordered stretch occupies residues 1-22 (MINIEDISKSSNQSEEKQLKST). 2 consecutive Ricin B-type lectin domains span residues 25 to 145 (KPKY…WTTF) and 156 to 288 (GYFQ…WIAN).

It belongs to the cup family.

Its subcellular location is the cytoplasm. It localises to the membrane. In terms of biological role, may play an important role in stabilizing and/or regulating the cell membrane during Ca(2+) stress or certain stages of development. The protein is Calcium up-regulated protein E (cupE) of Dictyostelium discoideum (Social amoeba).